A 369-amino-acid chain; its full sequence is Probable dual-specificity RNA methyltransferase RlmN (369 aa).

Glu-108 serves as the catalytic Proton acceptor. Residues 114–351 enclose the Radical SAM core domain; sequence YPDRATLCIS…IAQGVSCTVR (238 aa). The cysteines at positions 121 and 362 are disulfide-linked. The [4Fe-4S] cluster site is built by Cys-128, Cys-132, and Cys-135. S-adenosyl-L-methionine contacts are provided by residues 183 to 184, Ser-217, 240 to 242, and Asn-319; these read GE and SLH. Cys-362 (S-methylcysteine intermediate) is an active-site residue.

It belongs to the radical SAM superfamily. RlmN family. [4Fe-4S] cluster serves as cofactor.

Its subcellular location is the cytoplasm. It carries out the reaction adenosine(2503) in 23S rRNA + 2 reduced [2Fe-2S]-[ferredoxin] + 2 S-adenosyl-L-methionine = 2-methyladenosine(2503) in 23S rRNA + 5'-deoxyadenosine + L-methionine + 2 oxidized [2Fe-2S]-[ferredoxin] + S-adenosyl-L-homocysteine. It catalyses the reaction adenosine(37) in tRNA + 2 reduced [2Fe-2S]-[ferredoxin] + 2 S-adenosyl-L-methionine = 2-methyladenosine(37) in tRNA + 5'-deoxyadenosine + L-methionine + 2 oxidized [2Fe-2S]-[ferredoxin] + S-adenosyl-L-homocysteine. Specifically methylates position 2 of adenine 2503 in 23S rRNA and position 2 of adenine 37 in tRNAs. This is Probable dual-specificity RNA methyltransferase RlmN from Rhodococcus erythropolis (strain PR4 / NBRC 100887).